The primary structure comprises 95 residues: MDGIKYAVFTEKSIRLLGNNQYTSNVESGSTRAEIKHWIELFFGVKVIAMNSHRLPVPGKGRRMGPLMGHRMHYRRMIITLQPGYSIPPLIEKRT.

The protein belongs to the universal ribosomal protein uL23 family. In terms of assembly, part of the 50S ribosomal subunit.

Its subcellular location is the plastid. The protein resides in the chloroplast. Functionally, binds to 23S rRNA. The sequence is that of Large ribosomal subunit protein uL23cz/uL23cy (rpl23-A) from Amborella trichopoda.